The primary structure comprises 255 residues: tRNA (guanine-N(1)-)-methyltransferase (255 aa).

S-adenosyl-L-methionine-binding positions include glycine 117 and 137 to 142 (IGDYVL).

The protein belongs to the RNA methyltransferase TrmD family. In terms of assembly, homodimer.

It localises to the cytoplasm. The enzyme catalyses guanosine(37) in tRNA + S-adenosyl-L-methionine = N(1)-methylguanosine(37) in tRNA + S-adenosyl-L-homocysteine + H(+). Its function is as follows. Specifically methylates guanosine-37 in various tRNAs. The protein is tRNA (guanine-N(1)-)-methyltransferase of Glaesserella parasuis serovar 5 (strain SH0165) (Haemophilus parasuis).